Reading from the N-terminus, the 205-residue chain is Fibrillarin-like rRNA/tRNA 2'-O-methyltransferase (205 aa).

S-adenosyl-L-methionine-binding positions include 60-61 (ST), 76-77 (EF), 101-102 (DA), and 121-124 (DIAQ).

This sequence belongs to the methyltransferase superfamily. Fibrillarin family. Interacts with nop5. Component of box C/D small ribonucleoprotein (sRNP) particles that contain rpl7ae, FlpA and nop5, plus a guide RNA.

In terms of biological role, involved in pre-rRNA and tRNA processing. Utilizes the methyl donor S-adenosyl-L-methionine to catalyze the site-specific 2'-hydroxyl methylation of ribose moieties in rRNA and tRNA. Site specificity is provided by a guide RNA that base pairs with the substrate. Methylation occurs at a characteristic distance from the sequence involved in base pairing with the guide RNA. The polypeptide is Fibrillarin-like rRNA/tRNA 2'-O-methyltransferase (Methanospirillum hungatei JF-1 (strain ATCC 27890 / DSM 864 / NBRC 100397 / JF-1)).